Reading from the N-terminus, the 507-residue chain is ATP synthase subunit alpha, chloroplastic (507 aa).

An ATP-binding site is contributed by 170 to 177; it reads GDRQTGKT. A Phosphothreonine modification is found at threonine 257.

Belongs to the ATPase alpha/beta chains family. In terms of assembly, F-type ATPases have 2 components, CF(1) - the catalytic core - and CF(0) - the membrane proton channel. CF(1) has five subunits: alpha(3), beta(3), gamma(1), delta(1), epsilon(1). CF(0) has four main subunits: a, b, b' and c.

The protein localises to the plastid. It is found in the chloroplast thylakoid membrane. It carries out the reaction ATP + H2O + 4 H(+)(in) = ADP + phosphate + 5 H(+)(out). Produces ATP from ADP in the presence of a proton gradient across the membrane. The alpha chain is a regulatory subunit. The chain is ATP synthase subunit alpha, chloroplastic from Arabis hirsuta (Hairy rock-cress).